The sequence spans 184 residues: MDTKKIEAAVAQIIEAVGEDGSREGLQETPQRIAKMYQEIFAGLGETAEEHLAKSFEIIDNNMVVEKDIFFHSMCEHHFLPFYGKVHIAYVPNGRVAGLSKLARTVEVYAKKPQIQERLTVEIAEALMDYLGAQGALVWVEAEHMCMNMRGVRKPGTATVTTAARGVLATDKDLKNEAYKLMGH.

Cysteine 75, histidine 78, and cysteine 146 together coordinate Zn(2+).

It belongs to the GTP cyclohydrolase I family. In terms of assembly, toroid-shaped homodecamer, composed of two pentamers of five dimers.

The catalysed reaction is GTP + H2O = 7,8-dihydroneopterin 3'-triphosphate + formate + H(+). Its pathway is cofactor biosynthesis; 7,8-dihydroneopterin triphosphate biosynthesis; 7,8-dihydroneopterin triphosphate from GTP: step 1/1. The protein is GTP cyclohydrolase 1 of Streptococcus sanguinis (strain SK36).